Here is an 80-residue protein sequence, read N- to C-terminus: Protein FAM229B (80 aa).

The segment at 1 to 44 (MPFRFGTQPRRFPVEGGDSSIGLEPGLSSSAACNGKEMSPTRQL) is disordered.

Belongs to the FAM229 family.

The polypeptide is Protein FAM229B (FAM229B) (Macaca fascicularis (Crab-eating macaque)).